The following is a 230-amino-acid chain: tRNA (guanine-N(7)-)-methyltransferase (230 aa).

S-adenosyl-L-methionine-binding residues include E61, E86, D113, and D135. D135 is an active-site residue. Substrate is bound by residues K139, D171, and 209–212; that span reads TRYE.

This sequence belongs to the class I-like SAM-binding methyltransferase superfamily. TrmB family.

It carries out the reaction guanosine(46) in tRNA + S-adenosyl-L-methionine = N(7)-methylguanosine(46) in tRNA + S-adenosyl-L-homocysteine. It participates in tRNA modification; N(7)-methylguanine-tRNA biosynthesis. Catalyzes the formation of N(7)-methylguanine at position 46 (m7G46) in tRNA. This is tRNA (guanine-N(7)-)-methyltransferase from Rhizobium etli (strain ATCC 51251 / DSM 11541 / JCM 21823 / NBRC 15573 / CFN 42).